Here is a 434-residue protein sequence, read N- to C-terminus: Chemotaxis protein MotC (434 aa).

Positions 1 to 15 are cleaved as a signal peptide; that stretch reads MLKRLCTILAASALA. Residues 344–417 form a disordered region; it reads VVRPPLGESP…DPALDGFLAS (74 aa).

It localises to the periplasm. In terms of biological role, required for the rotation of the flagellar motor. Might control the energy flux or coupling that drives flagellar rotation. The chain is Chemotaxis protein MotC (motC) from Rhizobium meliloti (strain 1021) (Ensifer meliloti).